The primary structure comprises 431 residues: Reverse prenyltransferase criA (431 aa).

Residues R104, K193, Y195, K262, Y264, Y347, Y412, and Y416 each coordinate dimethylallyl diphosphate.

Belongs to the tryptophan dimethylallyltransferase family. In terms of assembly, monomer.

It catalyses the reaction cyclo(L-tryptophyl-L-alanyl) + dimethylallyl diphosphate = preechinulin + diphosphate. It participates in secondary metabolite biosynthesis. It functions in the pathway alkaloid biosynthesis. In terms of biological role, reverse prenyltransferase; part of the gene cluster that mediates the biosynthesis of echinulin family alkaloid. The pathway begins with the biosynthesis of the cyclic dipeptide cyclo-L-Trp-L-Ala (cyclo-TA) by the NRPS criC via condensation of L-alanine and L-tryptophan. The prenyltransferase criA then catalyzes the first prenylation step, a reverse prenylation reaction at C2, to yield preechinulin. Preechinulin is the substrate of the cytochrome P450 monooxygenase criE that catalyzes the formation of the double bond between C10 and C11 to produce neoechulin A. The unique prenyltransferase criF functions as a competitive enzyme with criE for preechinulin metabolization and uses preechinulin for effective regiospecific prenylations. Preechinulin is prenylated by criF at C5 or C7. C7-prenylation leads to accumulation of tardioxopiperazine B without further modification by criF. In contrast, the C5-prenylated tardioxopiperazine A can be prenylated again by criF, predominantly at C7 to form echinulin or less frequently at C4 to give variecolorin L. CriF also accepts neoechilunin A to produce varlecolorin G (prenylation at C5) or isoechinulin A (prenylation at C7). CriF further converts isoechinulin A into dehydroechinulin. Moreover, a yet unidentified enzyme can also convert neoechilunin A into neoechilunin B by introducing a double bond between positions C14 and C17 and thus provides a further substrate to criF for C5 and C7 prenylation. The protein is Reverse prenyltransferase criA of Aspergillus cristatus (Chinese Fuzhuan brick tea-fermentation fungus).